We begin with the raw amino-acid sequence, 130 residues long: Cuticle protein 14 isoform a (130 aa).

Residues 24–90 (IGNYNFGYNE…NVHTNEPGTD (67 aa)) enclose the Chitin-binding type R&amp;R domain.

The protein is Cuticle protein 14 isoform a of Limulus polyphemus (Atlantic horseshoe crab).